The following is a 374-amino-acid chain: Tryptophan--tRNA ligase (374 aa).

A 'HIGH' region motif is present at residues Pro81 to His89. A 'KMSKS' region motif is present at residues Lys258–Ser262.

It belongs to the class-I aminoacyl-tRNA synthetase family.

The protein localises to the cytoplasm. It catalyses the reaction tRNA(Trp) + L-tryptophan + ATP = L-tryptophyl-tRNA(Trp) + AMP + diphosphate + H(+). The sequence is that of Tryptophan--tRNA ligase from Pyrobaculum calidifontis (strain DSM 21063 / JCM 11548 / VA1).